A 158-amino-acid chain; its full sequence is Pyruvoyl-dependent arginine decarboxylase (158 aa).

Ser44 carries the pyruvic acid (Ser) modification.

It belongs to the PdaD family. The cofactor is pyruvate.

The enzyme catalyses L-arginine + H(+) = agmatine + CO2. The sequence is that of Pyruvoyl-dependent arginine decarboxylase from Pyrococcus furiosus (strain ATCC 43587 / DSM 3638 / JCM 8422 / Vc1).